The primary structure comprises 477 residues: TNF receptor-associated factor family protein DDB_G0278133 (477 aa).

The RING-type; degenerate zinc-finger motif lies at 45–88 (CDICTLELFIESEPKALQCKEGHLACRRCWERYLSTNKQCMTCK). 2 TRAF-type zinc fingers span residues 160-211 (NHYK…SSLS) and 212-267 (DHHK…SKMQ). Positions 271–326 (LEHSVTKLMNQNEIIKKDNQNLDQEKKIEEIKLKLNNLLNNYIQLKNEIAVLKQNS) form a coiled coil. Positions 331–463 (VYSNKWIIPE…FLNEKGELEI (133 aa)) constitute an MATH domain.

This sequence belongs to the TNF receptor-associated factor family. A subfamily.

It localises to the cytoplasm. Probable adapter protein and signal transducer that links members of the tumor necrosis factor receptor family to different signaling pathways by association with the receptor cytoplasmic domain and kinases. The polypeptide is TNF receptor-associated factor family protein DDB_G0278133 (Dictyostelium discoideum (Social amoeba)).